Consider the following 149-residue polypeptide: Large ribosomal subunit protein uL22c (149 aa).

This sequence belongs to the universal ribosomal protein uL22 family. Part of the 50S ribosomal subunit.

It is found in the plastid. It localises to the chloroplast. This protein binds specifically to 23S rRNA. Functionally, the globular domain of the protein is located near the polypeptide exit tunnel on the outside of the subunit, while an extended beta-hairpin is found that lines the wall of the exit tunnel in the center of the 70S ribosome. This is Large ribosomal subunit protein uL22c (rpl22-A) from Pelargonium hortorum (Common geranium).